The following is a 250-amino-acid chain: 2,3-bisphosphoglycerate-dependent phosphoglycerate mutase (250 aa).

Substrate-binding positions include 12–19, 25–26, Arg64, 91–94, Lys102, 118–119, and 185–186; these read RHGQSAWN, TG, ERHY, RR, and GN. The Tele-phosphohistidine intermediate role is filled by His13. Glu91 serves as the catalytic Proton donor/acceptor.

Belongs to the phosphoglycerate mutase family. BPG-dependent PGAM subfamily.

The enzyme catalyses (2R)-2-phosphoglycerate = (2R)-3-phosphoglycerate. Its pathway is carbohydrate degradation; glycolysis; pyruvate from D-glyceraldehyde 3-phosphate: step 3/5. Its function is as follows. Catalyzes the interconversion of 2-phosphoglycerate and 3-phosphoglycerate. This Corynebacterium efficiens (strain DSM 44549 / YS-314 / AJ 12310 / JCM 11189 / NBRC 100395) protein is 2,3-bisphosphoglycerate-dependent phosphoglycerate mutase.